Consider the following 366-residue polypeptide: G kinase-anchoring protein 1 (366 aa).

The interaction with IRS1 stretch occupies residues 1–95 (MASAVLSSVP…SHAVCNAQHD (95 aa)). Disordered stretches follow at residues 20-110 (QVDS…REEN) and 147-177 (EYED…DRPL). 3 positions are modified to phosphoserine: S23, S25, and S27. Polar residues predominate over residues 39-50 (TGKSQTLGSKST). Positions 47-77 (SKSTTNEKKREKRRKKKEQQQSEANELRNLA) form a coiled coil. Residue S106 is modified to Phosphoserine; by PKG. 2 coiled-coil regions span residues 128–160 (ADLE…QSKV) and 243–353 (EHNQ…YQGG).

The protein belongs to the GKAP1 family. Interacts with PRKG1 and IRS1.

It localises to the golgi apparatus. Regulates insulin-dependent IRS1 tyrosine phosphorylation in adipocytes by modulating the availability of IRS1 to IR tyrosine kinase. Its association with IRS1 is required for insulin-induced translocation of SLC2A4 to the cell membrane. Involved in TNF-induced impairment of insulin-dependent IRS1 tyrosine phosphorylation. In Homo sapiens (Human), this protein is G kinase-anchoring protein 1 (GKAP1).